The following is a 1198-amino-acid chain: Sterol 3-beta-glucosyltransferase (1198 aa).

A compositionally biased stretch (polar residues) spans 1-11 (MPITQIISASD). Disordered stretches follow at residues 1-89 (MPIT…DNAD) and 124-162 (SQVD…PEVP). Residues 35-51 (RHHRLSRSLSKFKRWRG) are compositionally biased toward basic residues. The segment covering 52–67 (RSNSSLSMGSSEQQEL) has biased composition (low complexity). A Phosphoserine modification is found at serine 76. Residues 146–162 (VKSKKENLKTKSHPEVP) are compositionally biased toward basic and acidic residues. The 50-residue stretch at 187-236 (AKLRQRFCLDEQEPFLNDFPAWLLKDVLVQGHIFITTKHFLFFAYLPKNP) folds into the GRAM 1 domain. Residues 238–336 (SVKMSGNLNI…WVNALKKEQF (99 aa)) form the PH domain. Residues 427-465 (KSSFGKETPATAEQKNNGEDSKYLNVPTSAVPSSENGKK) form a disordered region. Positions 452-461 (VPTSAVPSSE) are enriched in polar residues. Positions 570–636 (ERFRYHFKFN…VDVETCYKEK (67 aa)) constitute a GRAM 2 domain. The residue at position 693 (serine 693) is a Phosphoserine. UDP-alpha-D-glucose is bound by residues serine 749, arginine 750, aspartate 752, asparagine 1025, asparagine 1053, valine 1054, histidine 1056, histidine 1069, serine 1072, glycine 1073, threonine 1074, aspartate 1093, and glutamine 1094.

The protein belongs to the glycosyltransferase 28 family.

The protein resides in the cytoplasm. It is found in the membrane. The enzyme catalyses a sterol + UDP-alpha-D-glucose = a sterol 3-beta-D-glucoside + UDP + H(+). It carries out the reaction ergosterol + UDP-alpha-D-glucose = ergosteryl 3-beta-D-glucoside + UDP + H(+). In terms of biological role, sterol glycosyltransferase responsible for the glycosylation of ergosterol to form ergosterol-glucoside. Also shows activity in vitro on other sterols such as cholesterol, beta-sitosterol, stigmasterol and tomatidine. In contrasts to what is observed in Pichia pastoris and Aspergillus oryzae, is not involved in cytoplasm to vacuole transport (Cvt), pexophagy or nonselective autophagy in Saccharomyces cerevisiae. This chain is Sterol 3-beta-glucosyltransferase, found in Saccharomyces cerevisiae (strain YJM789) (Baker's yeast).